A 72-amino-acid polypeptide reads, in one-letter code: uncharacterized protein (72 aa).

Residues 1 to 38 are compositionally biased toward low complexity; it reads MSIFSSLSSLSTGSLKSSVSSIENGSSSGSFGSNETSG. Positions 1 to 42 are disordered; the sequence is MSIFSSLSSLSTGSLKSSVSSIENGSSSGSFGSNETSGWGQH.

This is an uncharacterized protein from Dictyostelium discoideum (Social amoeba).